A 185-amino-acid polypeptide reads, in one-letter code: Elongation factor P (185 aa).

It belongs to the elongation factor P family.

The protein resides in the cytoplasm. It functions in the pathway protein biosynthesis; polypeptide chain elongation. Functionally, involved in peptide bond synthesis. Stimulates efficient translation and peptide-bond synthesis on native or reconstituted 70S ribosomes in vitro. Probably functions indirectly by altering the affinity of the ribosome for aminoacyl-tRNA, thus increasing their reactivity as acceptors for peptidyl transferase. The protein is Elongation factor P of Thermosynechococcus vestitus (strain NIES-2133 / IAM M-273 / BP-1).